A 215-amino-acid chain; its full sequence is Protein HP-25 homolog 2 (215 aa).

The first 30 residues, Met-1–Ala-30, serve as a signal peptide directing secretion. The segment at Val-35–Glu-79 is disordered. One can recognise a Collagen-like domain in the interval Gly-43 to Gly-76. Residues Pro-45–Leu-68 are compositionally biased toward pro residues. Residues Leu-82–Gly-215 form the C1q domain.

The protein localises to the secreted. The sequence is that of Protein HP-25 homolog 2 from Bos taurus (Bovine).